The chain runs to 309 residues: Olfactory receptor 2AP1 (309 aa).

At 1–23 the chain is on the extracellular side; sequence MKNKTVLTEFILLGLTDVPELQV. N3 carries an N-linked (GlcNAc...) asparagine glycan. The helical transmembrane segment at 24-47 threads the bilayer; the sequence is AVFTFLFLAYLLSILGNLTILILT. The Cytoplasmic segment spans residues 48-55; it reads LLDSHLQT. A helical transmembrane segment spans residues 56-77; it reads PMYFFLRNFSFLEISFTNIFIP. Residues 78-98 lie on the Extracellular side of the membrane; it reads RVLISITTGNKSISFAGCFTQ. N87 carries N-linked (GlcNAc...) asparagine glycosylation. A disulfide bridge connects residues C95 and C187. Residues 99-118 traverse the membrane as a helical segment; sequence YFFAMFLGATEFYLLAAMSY. Topologically, residues 119 to 137 are cytoplasmic; sequence DRYVAICKPLHYTTIMSSR. A helical transmembrane segment spans residues 138–156; the sequence is ICIQLIFCSWLGGLMAIIP. Topologically, residues 157–193 are extracellular; it reads TITLMSQQDFCASNRLNHYFCDYEPLLELSCSDTSLI. Residues 194 to 217 traverse the membrane as a helical segment; that stretch reads EKVVFLVASVTLVVTLVLVILSYA. At 218–234 the chain is on the cytoplasmic side; that stretch reads FIIKTILKLPSAQQRTK. The chain crosses the membrane as a helical span at residues 235–257; that stretch reads AFSTCSSHMIVISLSYGSCMFMY. Over 258-270 the chain is Extracellular; the sequence is INPSAKEGDTFNK. Residues 271 to 290 form a helical membrane-spanning segment; it reads GVALLITSVAPLLNPFIYTL. Residues 291 to 309 are Cytoplasmic-facing; the sequence is RNQQVKQPFKDMVKKLLNL.

This sequence belongs to the G-protein coupled receptor 1 family.

It localises to the cell membrane. Functionally, odorant receptor. This chain is Olfactory receptor 2AP1 (OR2AP1), found in Homo sapiens (Human).